We begin with the raw amino-acid sequence, 209 residues long: Ribosomal RNA small subunit methyltransferase G (209 aa).

S-adenosyl-L-methionine is bound by residues G75, L80, 126–127, and R141; that span reads VE.

It belongs to the methyltransferase superfamily. RNA methyltransferase RsmG family.

The protein resides in the cytoplasm. It catalyses the reaction guanosine(527) in 16S rRNA + S-adenosyl-L-methionine = N(7)-methylguanosine(527) in 16S rRNA + S-adenosyl-L-homocysteine. In terms of biological role, specifically methylates the N7 position of guanine in position 527 of 16S rRNA. The protein is Ribosomal RNA small subunit methyltransferase G of Colwellia psychrerythraea (strain 34H / ATCC BAA-681) (Vibrio psychroerythus).